The chain runs to 37 residues: Large ribosomal subunit protein bL36c (37 aa).

The protein belongs to the bacterial ribosomal protein bL36 family.

It is found in the plastid. The protein resides in the chloroplast. In Jasminum nudiflorum (Winter jasmine), this protein is Large ribosomal subunit protein bL36c.